The primary structure comprises 912 residues: MDYKATLNLPQTNFQMKANLVNKEPEMLKFWEEKEIYKKTLETRANAPTYLLHDGPPYANGDIHLGTAMNKILKDFVTRYKTMRGYRVPFVPGWDTHGLPIEHRVTTSLGEEAKKKSPAEIRKLCKEFALKYVDIQREEFKRLGVKGDWEHPYITLDPDYEYHILDVFKTLVENGNVYRGNKPVYWCPTCRTALAEAEIEYHDHESPSIYVKFQMVDKPDTYIVIWTTTPWTIPANVAIALHPDYTYVKIKVDEEYWIVAEGLLQKFAADVGIDFEVVEKFVGKELEGKLTKHPLYDRTSVVVLADYVTLEDGTGCVHTAPGHGEEDYQTGLKYNLPVLSPVDDEGRFTKEAGKYEGLKIWDANKVIVEDLKNNGSLIKAGKISHSYPHCWRCKGPVMFRATPQWFISVDKNNLRGKVLEEIKKVKWYPAWGETRITAMVQERPDWTISRQRVWGVPIPAVKCKDCGEVTLEPKVIEHFANIVKEKGTDAWFELDVNELIPADFKCPACGSKNFEKTHDTLDVWIDSGCSWEAVIRSKGERFPVDLYLEGDDQHRGWFQSSIFLSTAKAGTAPFKAVVTHGFIKDEQGRKMSKSLGNVIDPMEIVNKYGADILRLWVASTDFFDNIRVGKNIIEQQVEVYRKLRNTLRYLLSNLYDFTEADLLPYEKLLPLDKWALGRLQKFIEQITQYYEGFEYSKVYNATVKYCTTELSAVYLDILKDRLYVEAKDSIYRRSAQTALHYILEALIKILAPIIPFTAEEAYQESHLKRYESVHLEYWPEVRKEFIDEALLEEFDHLLLIRDDVLKALENARASDIIGHSLDAHVIIEAKNEELKNLLRKYESLLEEFFIVSKVTLSENISGLNGQFANVLVQRAEGQKCQRCWKYHPDTGKDLEHPETCPRCSAVLRGERK.

The 'HIGH' region signature appears at 57–67; it reads PYANGDIHLGT. Glu549 contributes to the L-isoleucyl-5'-AMP binding site. The 'KMSKS' region motif lies at 590–594; sequence KMSKS. Residue Lys593 participates in ATP binding. Zn(2+) contacts are provided by Cys880, Cys883, Cys900, and Cys903.

The protein belongs to the class-I aminoacyl-tRNA synthetase family. IleS type 1 subfamily. As to quaternary structure, monomer. It depends on Zn(2+) as a cofactor.

It is found in the cytoplasm. It catalyses the reaction tRNA(Ile) + L-isoleucine + ATP = L-isoleucyl-tRNA(Ile) + AMP + diphosphate. Catalyzes the attachment of isoleucine to tRNA(Ile). As IleRS can inadvertently accommodate and process structurally similar amino acids such as valine, to avoid such errors it has two additional distinct tRNA(Ile)-dependent editing activities. One activity is designated as 'pretransfer' editing and involves the hydrolysis of activated Val-AMP. The other activity is designated 'posttransfer' editing and involves deacylation of mischarged Val-tRNA(Ile). This is Isoleucine--tRNA ligase from Fervidobacterium pennivorans (strain DSM 9078 / Ven5).